Consider the following 165-residue polypeptide: Putative TRAP transporter small permease protein HI_0051 (165 aa).

4 consecutive transmembrane segments (helical) span residues 20–40, 51–71, 94–114, and 136–156; these read LEYLSILALVIMISLVFFNSV, FSEEFSRICFVYMISFGIILV, IVLIVANICVLIAMIFIAYGA, and LYLAAVISAVSYFFIVMFSMI.

It belongs to the TRAP transporter small permease family.

Its subcellular location is the cell inner membrane. The chain is Putative TRAP transporter small permease protein HI_0051 from Haemophilus influenzae (strain ATCC 51907 / DSM 11121 / KW20 / Rd).